The sequence spans 205 residues: High frequency lysogenization protein HflD homolog (205 aa).

The protein belongs to the HflD family.

It localises to the cytoplasm. Its subcellular location is the cell inner membrane. This is High frequency lysogenization protein HflD homolog from Alkalilimnicola ehrlichii (strain ATCC BAA-1101 / DSM 17681 / MLHE-1).